Here is a 282-residue protein sequence, read N- to C-terminus: tRNA (guanine-N(1)-)-methyltransferase (282 aa).

The tract at residues 77–114 is disordered; the sequence is TGPAATVSDLESSAEHKRNLRPATTNGDAEPLGEKAGG. S-adenosyl-L-methionine-binding positions include Gly-149 and 173 to 178; that span reads IGDYVL.

It belongs to the RNA methyltransferase TrmD family. Homodimer.

It localises to the cytoplasm. The enzyme catalyses guanosine(37) in tRNA + S-adenosyl-L-methionine = N(1)-methylguanosine(37) in tRNA + S-adenosyl-L-homocysteine + H(+). Functionally, specifically methylates guanosine-37 in various tRNAs. The protein is tRNA (guanine-N(1)-)-methyltransferase of Corynebacterium jeikeium (strain K411).